The following is a 93-amino-acid chain: Small ribosomal subunit protein uS19 (93 aa).

The segment at 73 to 93 (EFSPTRTYRGHDKKDKKIQKK) is disordered.

It belongs to the universal ribosomal protein uS19 family.

In terms of biological role, protein S19 forms a complex with S13 that binds strongly to the 16S ribosomal RNA. This Phytoplasma mali (strain AT) protein is Small ribosomal subunit protein uS19.